We begin with the raw amino-acid sequence, 369 residues long: Transcription factor GTE6 (369 aa).

Residues 89–198 form the Bromo domain; that stretch reads KRMQDLMRQF…EKFEEKWAHF (110 aa). Positions 201-263 form a coiled coil; the sequence is KVQEEEKIRE…VERCRKITIE (63 aa). In terms of domain architecture, NET spans 250 to 331; sequence MRKVVERCRK…DALDNAMKKK (82 aa). Residues 329-348 are compositionally biased toward basic and acidic residues; that stretch reads KKKKEEETKTRELSGAQKKE. The interval 329–369 is disordered; sequence KKKKEEETKTRELSGAQKKEVSKKRNATTKLAERKTKRSRI. Residues 351-368 carry the Bipartite nuclear localization signal motif; it reads KKRNATTKLAERKTKRSR.

Abundantly expressed in flowers. Weakly expressed in roots, leaves and siliques; and undetectable in 5-day-old seedlings. In the basal rosette leaves of 21-day-old plants, it is more abundant in leaves 6 and 7, which possess narrow elliptical laminae, than in leaves 1-4, which have round laminae, suggesting a possible correlation between its expression and the formation of elliptical leaf laminae in mature leaves.

It localises to the nucleus. Regulates differences in leaf patterning between juvenile and mature leaves by controlling differences in the development of primordia produced during juvenile and mature phases. Acts by activating transcription of the myb-domain protein AS1, a gene involved in leaf-axis specification. Associates with the promoter and the start of the transcribed region of AS1 and up-regulates expression of AS1 through acetylation of histones H3 and H4. In Arabidopsis thaliana (Mouse-ear cress), this protein is Transcription factor GTE6 (GTE6).